Reading from the N-terminus, the 501-residue chain is Neuronal acetylcholine receptor subunit beta-2 (501 aa).

The first 25 residues, 1 to 25 (MARCSNSMALLFSFGLLWLCSGVLG), serve as a signal peptide directing secretion. Over 26 to 238 (TDTEERLVEH…IIRRKPLFYT (213 aa)) the chain is Extracellular. N51 and N168 each carry an N-linked (GlcNAc...) asparagine glycan. An intrachain disulfide couples C155 to C169. The helical transmembrane segment at 239–259 (INLIIPCVLITSLAILVFYLP) threads the bilayer. Over 260-267 (SDCGEKMT) the chain is Cytoplasmic. The chain crosses the membrane as a helical span at residues 268–288 (LCISVLLALTVFLLLISKIVP). Over 289–300 (PTSLDVPLVGKY) the chain is Extracellular. Residues 301-321 (LMFTMVLVTFSIVTSVCVLNV) form a helical membrane-spanning segment. Residues 322 to 459 (HHRSPTTHTM…WKYVAMVIDR (138 aa)) lie on the Cytoplasmic side of the membrane. The helical transmembrane segment at 460-480 (LFLWIFVFVCVFGTIGMFLQP) threads the bilayer.

It belongs to the ligand-gated ion channel (TC 1.A.9) family. Acetylcholine receptor (TC 1.A.9.1) subfamily. Beta-2/CHRNB2 sub-subfamily. In terms of assembly, neuronal AChR is a heteropentamer composed of two different types of subunits: alpha and beta. CHRNB2/Beta-2 subunit can be combined to CHRNA2/alpha-2, CHRNA3/alpha-3 or CHRNA4/alpha-4, CHRNA5/alpha-5, CHRNA6/alpha-6 and CHRNB3/beta-3 to give rise to functional receptors. CHRNA2:CHRNB2 and CHRNA4:CHRNB2 nAChR complexes exist in two subtypes: LS (low agonist sensitivity) with a (CHRNA2/4)3:(CHRNB2)2 and HS (high agonist sensitivity) with a (CHRNA2/4)2:(CHRNB2)3 stoichiometry; the subtypes differ in their subunit binding interfaces which are involved in ligand binding. Cells produce predominantly an (CHRNA4)3:(CHRNB2)2 nAChR. The stoichiometric form (CHRNA4)2:(CHRNB2)3 expression is selectively up-regulated by nicotine and has lower single channel conductance and calcium permeability. Also part of the stoichiometric forms: (CHRNA4:CHRNB2)2:CHRNB3 or (CHRNA6:CHRNB2)2:CHRNB3. Can form heteropentamers with CHRNA7, mainly found in basal forebrain cholinergic neurons. Interacts with RIC3; which is required for proper folding and assembly. Interacts with LYPD6.

It is found in the synaptic cell membrane. The protein resides in the cell membrane. It catalyses the reaction K(+)(in) = K(+)(out). The enzyme catalyses Na(+)(in) = Na(+)(out). The catalysed reaction is Ca(2+)(in) = Ca(2+)(out). Its activity is regulated as follows. Activated by a myriad of ligands such as acetylcholine, cytisine, nicotine, choline and epibatidine. Channel potentiation by calcium is stoichiometry-selective, CHRNA4:CHRNB2 nACh receptor is achieved by calcium association with topographically distinct sites framed by anionic residues within the CHRNA4 subunit and between the CHRNA4 and CHRNB2 subunits. Oligomeric amyloid-beta protein 42 activates specifially CHRNA7:CHRNB2 nAchRs. nAChR activity is inhibited by the antagonist alpha-conotoxins BuIA, PnIA, PnIC, GID and MII, small disulfide-constrained peptides from cone snails. Functionally, component of neuronal acetylcholine receptors (nAChRs) that function as pentameric, ligand-gated cation channels with high calcium permeability among other activities. nAChRs are excitatory neurotrasnmitter receptors formed by a collection of nAChR subunits known to mediate synaptic transmission in the nervous system and the neuromuscular junction. Each nAchR subunit confers differential attributes to channel properties, including activation, deactivation and desensitization kinetics, pH sensitivity, cation permeability, and binding to allosteric modulators. CHRNB2 forms heteropentameric neuronal acetylcholine receptors with CHRNA2, CHRNA3, CHRNA4 and CHRNA6, as well as CHRNA5 and CHRNB3 as accesory subunits. Found in two major stoichiometric forms,(CHRNA4)3:(CHRNB2)2 and (CHRNA4)2:(CHRNB2)3, the two stoichiometric forms differ in their unitary conductance, calcium permeability, ACh sensitivity and potentiation by divalent cation. Heteropentameric channels with CHRNA6 and CHRNA4 exhibit high sensitivity to ACh and nicotine and are predominantly expressed in only a few brain areas, including dopaminergic neurons, norepirephrine neurons and cells of the visual system. nAChrs containing CHRNA6 subunits mediate endogenous cholinergic modulation of dopamine and gamma-aminobutyric acid (GABA) release in response to nicotine at nerve terminals. Also forms functional nAChRs with other subunits such as CHRNA7:CHRNB2, mainly expressed in basal forebrain cholinergic neurons. The chain is Neuronal acetylcholine receptor subunit beta-2 (Chrnb2) from Mus musculus (Mouse).